The following is a 445-amino-acid chain: UDP-N-acetylmuramoylalanine--D-glutamate ligase (445 aa).

126-132 is an ATP binding site; the sequence is GTSGKTT.

It belongs to the MurCDEF family.

It localises to the cytoplasm. It carries out the reaction UDP-N-acetyl-alpha-D-muramoyl-L-alanine + D-glutamate + ATP = UDP-N-acetyl-alpha-D-muramoyl-L-alanyl-D-glutamate + ADP + phosphate + H(+). It participates in cell wall biogenesis; peptidoglycan biosynthesis. Cell wall formation. Catalyzes the addition of glutamate to the nucleotide precursor UDP-N-acetylmuramoyl-L-alanine (UMA). The sequence is that of UDP-N-acetylmuramoylalanine--D-glutamate ligase from Nitratidesulfovibrio vulgaris (strain DSM 19637 / Miyazaki F) (Desulfovibrio vulgaris).